Reading from the N-terminus, the 246-residue chain is Probable transcriptional regulatory protein HSM_1763 (246 aa).

The protein belongs to the TACO1 family.

The protein resides in the cytoplasm. This is Probable transcriptional regulatory protein HSM_1763 from Histophilus somni (strain 2336) (Haemophilus somnus).